The sequence spans 383 residues: MPSGCRCLHLVCLLCILGAPVKPARGNDCSSLCDLAHGCCAPDGSCRCDPGWEGLHCERCVRMPGCQHGTCHQPWQCICHTGWAGKFCDKDEHICTTQSPCRNGGQCVYDGGGDYHCVCPPGFHGRDCERKAGPCEQAGSPCRNGGQCQDDQGFALNFTCRCLAGFMGARCEVNVDDCLMRPCANGATCLDGINRFSCLCPEGFTGRFCTINLDDCASRPCQRGARCRDRVHDFDCLCPSGYGGKTCELVLPVPGPAATADSPPGPTLAVLVPATGPIPHSAGAGLLRISVKEVVRRQEAGLGEPSLVAVVVFGAVTAALVLSTVLLTLRAWRRGFCPPGPCCYPAPHYAPARQDQECQVSMLPTGLPLPPDLPPEPGKTTAL.

Residues 1-26 (MPSGCRCLHLVCLLCILGAPVKPARG) form the signal peptide. 4 EGF-like domains span residues 27–58 (NDCS…LHCE), 62–89 (RMPG…KFCD), 91–129 (DEHI…RDCE), and 131–172 (KAGP…ARCE). The Extracellular segment spans residues 27 to 306 (NDCSSLCDLA…RQEAGLGEPS (280 aa)). Intrachain disulfides connect Cys-29/Cys-40, Cys-33/Cys-46, Cys-48/Cys-57, Cys-66/Cys-71, Cys-79/Cys-88, Cys-95/Cys-107, Cys-101/Cys-117, Cys-119/Cys-128, Cys-135/Cys-148, Cys-142/Cys-160, Cys-162/Cys-171, Cys-178/Cys-189, Cys-183/Cys-198, Cys-200/Cys-209, Cys-216/Cys-227, Cys-221/Cys-236, and Cys-238/Cys-247. Asn-157 is a glycosylation site (N-linked (GlcNAc...) asparagine). Residues 174–210 (NVDDCLMRPCANGATCLDGINRFSCLCPEGFTGRFCT) form the EGF-like 5; calcium-binding domain. The EGF-like 6; calcium-binding domain occupies 212 to 248 (NLDDCASRPCQRGARCRDRVHDFDCLCPSGYGGKTCE). The chain crosses the membrane as a helical span at residues 307-327 (LVAVVVFGAVTAALVLSTVLL). The Cytoplasmic segment spans residues 328-383 (TLRAWRRGFCPPGPCCYPAPHYAPARQDQECQVSMLPTGLPLPPDLPPEPGKTTAL). Residues 364-383 (PTGLPLPPDLPPEPGKTTAL) are disordered. The span at 367 to 377 (LPLPPDLPPEP) shows a compositional bias: pro residues.

It localises to the membrane. In terms of biological role, regulates adipogenesis. This chain is Protein delta homolog 2 (DLK2), found in Bos taurus (Bovine).